The following is a 306-amino-acid chain: Glutathione transport system permease protein GsiC (306 aa).

Residues 1–8 lie on the Cytoplasmic side of the membrane; the sequence is MLNYVIKR. The chain crosses the membrane as a helical span at residues 9 to 29; it reads LLGLIPTLFIVSVLVFLFVHM. Residues 30 to 102 are Periplasmic-facing; the sequence is LPGDPARLIA…SRFMPTLWLT (73 aa). Positions 95–292 constitute an ABC transmembrane type-1 domain; it reads FMPTLWLTIT…LEFILINLVV (198 aa). A helical transmembrane segment spans residues 103-123; that stretch reads ITSMVWAVIFGMAAGIIAAVW. Topologically, residues 124–134 are cytoplasmic; it reads RNRWPDRLSMT. The chain crosses the membrane as a helical span at residues 135–155; the sequence is IAVSGISFPAFALGMLLIQVF. Topologically, residues 156–168 are periplasmic; sequence SVELGWLPTVGAD. A helical membrane pass occupies residues 169 to 189; that stretch reads SWQHYILPSLTLGAAVAAVMA. The Cytoplasmic portion of the chain corresponds to 190–228; sequence RFTRASFVDVLSEDYMRTARAKGVSETWVVLKHGLRNAM. A helical membrane pass occupies residues 229-249; sequence IPVVTMMGLQFGFLLGGSIVV. The Periplasmic portion of the chain corresponds to 250–277; that stretch reads EKVFNWPGLGRLLVDSVEMRDYPVIQAE. Residues 278–298 form a helical membrane-spanning segment; sequence ILLFSLEFILINLVVDVLYAA. Residues 299 to 306 are Cytoplasmic-facing; it reads INPAIRYK.

Belongs to the binding-protein-dependent transport system permease family. As to quaternary structure, the complex is composed of two ATP-binding proteins (GsiA), two transmembrane proteins (GsiC and GsiD) and a solute-binding protein (GsiB).

It is found in the cell inner membrane. Its function is as follows. Part of the ABC transporter complex GsiABCD involved in glutathione import. Probably responsible for the translocation of the substrate across the membrane. This is Glutathione transport system permease protein GsiC from Escherichia coli O6:H1 (strain CFT073 / ATCC 700928 / UPEC).